Reading from the N-terminus, the 1873-residue chain is Kinesin-related protein 8 (1873 aa).

A Kinesin motor domain is found at 13–413 (CVRVALRVRP…LKYAYRARNI (401 aa)). 93-100 (GQTGSGKT) is an ATP binding site. 9 disordered regions span residues 231-302 (NSPV…DERN), 463-567 (VSIP…SPTS), 778-797 (LDKD…YYED), 841-891 (KIDS…ARKT), 930-1008 (KQRV…TEQL), 1179-1207 (PQPL…QRSS), 1244-1267 (LPSQ…STSS), 1328-1360 (TTTT…NNSS), and 1403-1467 (NNIT…PRPD). Over residues 232 to 247 (SPVTSSSTSSTSTSSS) the composition is skewed to low complexity. Residues 280–297 (IDEDEEDDEEDEDDDIMS) show a composition bias toward acidic residues. A compositionally biased stretch (low complexity) spans 473 to 567 (TPTLTNNNNN…NNTATPSPTS (95 aa)). Residues 715–933 (FENDSEELSD…KEIEVHKQRV (219 aa)) are a coiled coil. 5 stretches are compositionally biased toward low complexity: residues 937 to 1005 (INSK…TPTT), 1182 to 1200 (LQSQ…NSEQ), 1244 to 1254 (LPSQQQLSSSQ), 1348 to 1358 (NNTNNNNNNNN), and 1423 to 1454 (SLQS…SNNN). 5 WD repeats span residues 1506-1546 (GHDG…NMLD), 1548-1587 (SSPG…NTNL), 1589-1628 (IFKT…KPLK), 1636-1673 (HHTG…LAQK), and 1677-1714 (PHHD…NLIN). The disordered stretch occupies residues 1758 to 1780 (NNNNNNSSNNNKSSSAPSSTTSS). WD repeat units follow at residues 1805 to 1842 (AHND…NSLL) and 1844 to 1873 (GHES…IWKC).

Belongs to the TRAFAC class myosin-kinesin ATPase superfamily. Kinesin family.

The protein localises to the cytoplasm. Its subcellular location is the cytoskeleton. In terms of biological role, microtubule-associated force-producing protein that plays a role in organelle transport. Its motor activity is directed toward the microtubule's plus end. Cooperates with kif10 and dynein to organize interphase microtubules. This is Kinesin-related protein 8 (kif8) from Dictyostelium discoideum (Social amoeba).